The following is a 504-amino-acid chain: Lysine--tRNA ligase (504 aa).

The 'HIGH' region motif lies at 23–31 (PSGPIHIGN).

Belongs to the class-I aminoacyl-tRNA synthetase family.

The protein localises to the cytoplasm. It catalyses the reaction tRNA(Lys) + L-lysine + ATP = L-lysyl-tRNA(Lys) + AMP + diphosphate. The protein is Lysine--tRNA ligase of Picrophilus torridus (strain ATCC 700027 / DSM 9790 / JCM 10055 / NBRC 100828 / KAW 2/3).